The primary structure comprises 210 residues: DNA-directed RNA polymerases I, II, and III subunit RPABC1 (210 aa).

Methionine 1 carries the N-acetylmethionine modification. Lysine 81 is covalently cross-linked (Glycyl lysine isopeptide (Lys-Gly) (interchain with G-Cter in SUMO2)).

Belongs to the archaeal Rpo5/eukaryotic RPB5 RNA polymerase subunit family. As to quaternary structure, component of the RNA polymerase I (Pol I), RNA polymerase II (Pol II) and RNA polymerase III (Pol III) complexes consisting of at least 13, 12 and 17 subunits, respectively. Pol I complex consists of a ten-subunit catalytic core composed of POLR1A/RPA1, POLR1B/RPA2, POLR1C/RPAC1, POLR1D/RPAC2, POLR1H/RPA12, POLR2E/RPABC1, POLR2F/RPABC2, POLR2H/RPABC3, POLR2K/RPABC4 and POLR2L/RPABC5; a mobile stalk subunit POLR1F/RPA43 protruding from the core and additional subunits homologous to general transcription factors POLR1E/RPA49 and POLR1G/RPA34. Part of Pol I pre-initiation complex (PIC), in which Pol I core assembles with RRN3 and promoter-bound UTBF and SL1/TIF-IB complex. Pol II complex contains a ten-subunit catalytic core composed of POLR2A/RPB1, POLR2B/RPB2, POLR2C/RPB3, POLR2I/RPB9, POLR2J/RPB11, POLR2E/RPABC1, POLR2F/RPABC2, POLR2H/RPABC3, POLR2K/RPABC4 and POLR2L/RPABC5 and a mobile stalk composed of two subunits POLR2D/RPB4 and POLR2G/RPB7. Part of Pol II(G) complex, in which Pol II core associates with an additional subunit POLR2M; unlike conventional Pol II, Pol II(G) functions as a transcriptional repressor. Part of TBP-based Pol II pre-initiation complex (PIC), in which Pol II core assembles with general transcription factors and other specific initiation factors including GTF2E1, GTF2E2, GTF2F1, GTF2F2, TCEA1, ERCC2, ERCC3, GTF2H2, GTF2H3, GTF2H4, GTF2H5, GTF2A1, GTF2A2, GTF2B and TBP; this large multi-subunit PIC complex mediates DNA unwinding and targets Pol II core to the transcription start site where the first phosphodiester bond forms. In Pol II complex, this subunit is present in 2-fold molar excess over the other subunits. Pol III complex consists of a ten-subunit catalytic core composed of POLR3A/RPC1, POLR3B/RPC2, POLR1C/RPAC1, POLR1D/RPAC2, POLR3K/RPC10, POLR2E/RPABC1, POLR2F/RPABC2, POLR2H/RPABC3, POLR2K/RPABC4 and POLR2L/RPABC5; a mobile stalk composed of two subunits POLR3H/RPC8 and CRCP/RPC9, protruding from the core and functioning primarily in transcription initiation; and additional subunits homologous to general transcription factors of the RNA polymerase II machinery, POLR3C/RPC3-POLR3F/RPC6-POLR3G/RPC7 heterotrimer required for transcription initiation and POLR3D/RPC4-POLR3E/RPC5 heterodimer involved in both transcription initiation and termination. Component of the PAQosome complex which is responsible for the biogenesis of several protein complexes and which consists of R2TP complex members RUVBL1, RUVBL2, RPAP3 and PIH1D1, URI complex members PFDN2, PFDN6, PDRG1, UXT and URI1 as well as ASDURF, POLR2E and DNAAF10/WDR92. Interacts with URI1.

Its subcellular location is the nucleus. It is found in the nucleolus. DNA-dependent RNA polymerase catalyzes the transcription of DNA into RNA using the four ribonucleoside triphosphates as substrates. Common component of RNA polymerases I, II and III which synthesize ribosomal RNA precursors, mRNA precursors and many functional non-coding RNAs, and small RNAs, such as 5S rRNA and tRNAs, respectively. Pol II is the central component of the basal RNA polymerase II transcription machinery. Pols are composed of mobile elements that move relative to each other. In Pol II, POLR2E/RPABC1 is part of the lower jaw surrounding the central large cleft and thought to grab the incoming DNA template. Seems to be the major component in this process. This chain is DNA-directed RNA polymerases I, II, and III subunit RPABC1 (POLR2E), found in Pongo abelii (Sumatran orangutan).